The chain runs to 137 residues: Large ribosomal subunit protein uL16 (137 aa).

The protein belongs to the universal ribosomal protein uL16 family. In terms of assembly, part of the 50S ribosomal subunit.

Binds 23S rRNA and is also seen to make contacts with the A and possibly P site tRNAs. In Anaplasma phagocytophilum (strain HZ), this protein is Large ribosomal subunit protein uL16.